A 218-amino-acid chain; its full sequence is Stress response regulator protein 1 (218 aa).

In terms of domain architecture, Response regulatory spans 90 to 209 (RFLLVDDNSI…YRVVLDVVDN (120 aa)). D142 bears the 4-aspartylphosphate mark.

Required for stress adaptation, morphogenesis and virulence. In Meyerozyma guilliermondii (strain ATCC 6260 / CBS 566 / DSM 6381 / JCM 1539 / NBRC 10279 / NRRL Y-324) (Yeast), this protein is Stress response regulator protein 1 (SRR1).